A 638-amino-acid polypeptide reads, in one-letter code: 1-deoxy-D-xylulose-5-phosphate synthase (638 aa).

Thiamine diphosphate contacts are provided by residues His76 and 117–119; that span reads AHS. Mg(2+) is bound at residue Asp148. Thiamine diphosphate is bound by residues 149–150, Asn177, Tyr287, and Glu369; that span reads GS. A Mg(2+)-binding site is contributed by Asn177.

Belongs to the transketolase family. DXPS subfamily. In terms of assembly, homodimer. Mg(2+) serves as cofactor. The cofactor is thiamine diphosphate.

The enzyme catalyses D-glyceraldehyde 3-phosphate + pyruvate + H(+) = 1-deoxy-D-xylulose 5-phosphate + CO2. The protein operates within metabolic intermediate biosynthesis; 1-deoxy-D-xylulose 5-phosphate biosynthesis; 1-deoxy-D-xylulose 5-phosphate from D-glyceraldehyde 3-phosphate and pyruvate: step 1/1. Functionally, catalyzes the acyloin condensation reaction between C atoms 2 and 3 of pyruvate and glyceraldehyde 3-phosphate to yield 1-deoxy-D-xylulose-5-phosphate (DXP). The protein is 1-deoxy-D-xylulose-5-phosphate synthase of Rhodopseudomonas palustris (strain BisB5).